The chain runs to 196 residues: Probable GTP-binding protein EngB (196 aa).

The EngB-type G domain maps to 21 to 195 (DVSEICLIGR…YELINKLLGS (175 aa)). GTP-binding positions include 29–36 (GRSNVGKS), 56–60 (GKTRL), 75–78 (DAPG), 142–145 (TKLD), and 174–176 (ISN). Residues Ser36 and Thr58 each contribute to the Mg(2+) site.

It belongs to the TRAFAC class TrmE-Era-EngA-EngB-Septin-like GTPase superfamily. EngB GTPase family. Mg(2+) serves as cofactor.

Necessary for normal cell division and for the maintenance of normal septation. The sequence is that of Probable GTP-binding protein EngB from Mycoplasma capricolum subsp. capricolum (strain California kid / ATCC 27343 / NCTC 10154).